Here is a 131-residue protein sequence, read N- to C-terminus: uncharacterized protein (131 aa).

In terms of domain architecture, HTH hxlR-type spans 26-124; that stretch reads CSVEVAVNEI…WGKMYGSHQE (99 aa).

This is an uncharacterized protein from Methanothermobacter thermautotrophicus (strain ATCC 29096 / DSM 1053 / JCM 10044 / NBRC 100330 / Delta H) (Methanobacterium thermoautotrophicum).